Reading from the N-terminus, the 128-residue chain is Probable 4-amino-4-deoxy-L-arabinose-phosphoundecaprenol flippase subunit ArnF (128 aa).

The Cytoplasmic segment spans residues 1–2; sequence MG. Residues 3–23 traverse the membrane as a helical segment; sequence LIWGLFSVIIASVAQLSLGFA. Over 24–35 the chain is Periplasmic; sequence ASHLPPMTHLWD. Residues 36–56 form a helical membrane-spanning segment; sequence FIAALLAFGLDARILLLGLLG. The Cytoplasmic segment spans residues 57–76; sequence YLLSVFCWYKTLHKLALSKA. A helical membrane pass occupies residues 77-97; the sequence is YALLSMSYVLVWIASMVLPGW. At 98–100 the chain is on the periplasmic side; it reads EGT. A helical transmembrane segment spans residues 101-121; sequence FSLKALLGVACIMSGLMLIFL. Over 122 to 128 the chain is Cytoplasmic; that stretch reads PMTKQRY.

Belongs to the ArnF family. In terms of assembly, heterodimer of ArnE and ArnF.

The protein resides in the cell inner membrane. The protein operates within bacterial outer membrane biogenesis; lipopolysaccharide biosynthesis. In terms of biological role, translocates 4-amino-4-deoxy-L-arabinose-phosphoundecaprenol (alpha-L-Ara4N-phosphoundecaprenol) from the cytoplasmic to the periplasmic side of the inner membrane. This is Probable 4-amino-4-deoxy-L-arabinose-phosphoundecaprenol flippase subunit ArnF from Escherichia coli O9:H4 (strain HS).